The following is a 345-amino-acid chain: MCSQEGEGYSLLKEYANGFMVSQVLFAACELGVFELLAEALEPLDSAAVSSHLGSSPQGTELLLNTCVSLKLLQADVRGGKAVYANTELASTYLVRGSPRSQRDMLLYAGRTAYVCWRHLAEAVREGRNQYLKAFGIPSEELFSAIYRSEDERLQFMQGLQDVWRLEGATVLAAFDLSPFPLICDLGGGSGALAKACVSLYPGCRAIVFDIPGVVQIAKRHFSASEDERISFHEGDFFKDALPEADLYILARVLHDWTDAKCSHLLQRVYRACRTGGGILVIESLLDTDGRGPLTTLLYSLNMLVQTEGRERTPAEYRALLGPAGFRDVRCRRTGGTYDAVLARK.

Residues Y147, W164, D210, 235–237 (GDF), and R252 contribute to the S-adenosyl-L-methionine site. H255 functions as the Proton donor/acceptor in the catalytic mechanism. Substrate is bound by residues D256, N302, and Q306.

It belongs to the class I-like SAM-binding methyltransferase superfamily. Cation-independent O-methyltransferase family. Homodimer. In terms of tissue distribution, expressed in the pineal gland (at protein level). Not detectable in retina, nor in liver.

It catalyses the reaction N-acetylserotonin + S-adenosyl-L-methionine = melatonin + S-adenosyl-L-homocysteine + H(+). Its pathway is aromatic compound metabolism; melatonin biosynthesis; melatonin from serotonin: step 1/2. Functionally, catalyzes the transfer of a methyl group onto N-acetylserotonin, producing melatonin (N-acetyl-5-methoxytryptamine). The protein is Acetylserotonin O-methyltransferase (ASMT) of Bos taurus (Bovine).